The following is a 137-amino-acid chain: Basic phospholipase A2 homolog Pgo-K49 (137 aa).

Residues 1–16 form the signal peptide; sequence MRTLLIVAVLLVGVEG. 7 disulfide bridges follow: Cys-42-Cys-131, Cys-44-Cys-60, Cys-59-Cys-111, Cys-65-Cys-137, Cys-66-Cys-104, Cys-73-Cys-97, and Cys-91-Cys-102. An important for membrane-damaging activities in eukaryotes and bacteria; heparin-binding region spans residues 121–133; it reads KKYKIHMKFFCKK.

As to expression, expressed by the venom gland.

Its subcellular location is the secreted. Snake venom phospholipase A2 homolog that lacks enzymatic activity. Is myotoxic. A model of myotoxic mechanism has been proposed: an apo Lys49-PLA2 is activated by the entrance of a hydrophobic molecule (e.g. fatty acid) at the hydrophobic channel of the protein leading to a reorientation of a monomer. This reorientation causes a transition between 'inactive' to 'active' states, causing alignment of C-terminal and membrane-docking sites (MDoS) side-by-side and putting the membrane-disruption sites (MDiS) in the same plane, exposed to solvent and in a symmetric position for both monomers. The MDoS region stabilizes the toxin on membrane by the interaction of charged residues with phospholipid head groups. Subsequently, the MDiS region destabilizes the membrane with penetration of hydrophobic residues. This insertion causes a disorganization of the membrane, allowing an uncontrolled influx of ions (i.e. calcium and sodium), and eventually triggering irreversible intracellular alterations and cell death. The polypeptide is Basic phospholipase A2 homolog Pgo-K49 (Cerrophidion godmani (Porthidium godmani)).